The sequence spans 432 residues: Cyclic di-GMP phosphodiesterase CdgJ (432 aa).

An EAL domain is found at 1–232; the sequence is MVRCLWAAEC…QRYVSPEHVI (232 aa). Residues 226 to 413 enclose the HDOD domain; the sequence is VSPEHVIAMQ…CLELGFDLED (188 aa).

The enzyme catalyses 3',3'-c-di-GMP + H2O = 5'-phosphoguanylyl(3'-&gt;5')guanosine + H(+). Functionally, phosphodiesterase (PDE) that catalyzes the hydrolysis of cyclic diguanylate (c-di-GMP). Positively regulates motility and negatively regulates biofilm formation. This is Cyclic di-GMP phosphodiesterase CdgJ from Vibrio cholerae serotype O1 (strain ATCC 39315 / El Tor Inaba N16961).